Here is a 532-residue protein sequence, read N- to C-terminus: Muscarinic acetylcholine receptor M5 (532 aa).

At 1–29 the chain is on the extracellular side; that stretch reads MEGDSYGNATTINGTPVNHQPLERHRLWE. Asn-8 carries an N-linked (GlcNAc...) asparagine glycan. A helical membrane pass occupies residues 30–53; it reads VITIAAVTAVVSLITIVGNVLVMI. At 54-66 the chain is on the cytoplasmic side; the sequence is SFKVNSQLKTVNN. The helical transmembrane segment at 67–87 threads the bilayer; the sequence is YYLLSLACADLIIGIFSMNLY. Residues 88–104 are Extracellular-facing; it reads TTYILMGRWALGSLACD. Residues 105 to 126 traverse the membrane as a helical segment; the sequence is LWLALDYVASNASVMNLLVISF. The Cytoplasmic segment spans residues 127 to 146; that stretch reads DRYFSITRPLTYRAKRTPKR. The chain crosses the membrane as a helical span at residues 147–169; the sequence is AGIMIGLAWLISFILWAPAILCW. The Extracellular segment spans residues 170–191; it reads QYLVGKRTVPPDECQIQFLSEP. Residues 192–214 form a helical membrane-spanning segment; the sequence is TITFGTAIAAFYIPVSVMTILYC. Residues 215–443 are Cytoplasmic-facing; that stretch reads RIYRETEKRT…LVKERKAAQT (229 aa). A disordered region spans residues 263–294; that stretch reads QRERNQASRSSSHRSTSITGKPSQATGPSTNW. The segment covering 270–279 has biased composition (low complexity); it reads SRSSSHRSTS. Residues 280-294 show a composition bias toward polar residues; that stretch reads ITGKPSQATGPSTNW. The chain crosses the membrane as a helical span at residues 444–464; the sequence is LSAILLAFIITWTPYNIMVLV. The Extracellular segment spans residues 465-478; sequence STFCDKCVPVALWH. A helical membrane pass occupies residues 479–498; that stretch reads LGYWLCYVNSTVNPICYALC. Residues 499 to 532 are Cytoplasmic-facing; the sequence is NRTFRKTFKMLLLCQWKKKKVEEKLYWQGNSKLP. A phosphothreonine mark is found at Thr-501 and Thr-505.

This sequence belongs to the G-protein coupled receptor 1 family. Muscarinic acetylcholine receptor subfamily. CHRM5 sub-subfamily.

The protein resides in the cell membrane. The protein localises to the postsynaptic cell membrane. The muscarinic acetylcholine receptor mediates various cellular responses, including inhibition of adenylate cyclase, breakdown of phosphoinositides and modulation of potassium channels through the action of G proteins. Primary transducing effect is Pi turnover. This Saimiri boliviensis boliviensis (Bolivian squirrel monkey) protein is Muscarinic acetylcholine receptor M5 (CHRM5).